The sequence spans 371 residues: Aspartate-semialdehyde dehydrogenase (371 aa).

Residues 9-12, 37-38, and Q73 contribute to the NADP(+) site; these read RGMV and TS. R102 lines the phosphate pocket. Catalysis depends on C135, which acts as the Acyl-thioester intermediate. Q162 provides a ligand contact to substrate. NADP(+)-binding positions include 165-166 and P193; that span reads SG. Residue E241 participates in substrate binding. Phosphate is bound at residue K244. A substrate-binding site is contributed by R268. H275 functions as the Proton acceptor in the catalytic mechanism. Q351 lines the NADP(+) pocket.

Belongs to the aspartate-semialdehyde dehydrogenase family. As to quaternary structure, homodimer.

It carries out the reaction L-aspartate 4-semialdehyde + phosphate + NADP(+) = 4-phospho-L-aspartate + NADPH + H(+). It functions in the pathway amino-acid biosynthesis; L-lysine biosynthesis via DAP pathway; (S)-tetrahydrodipicolinate from L-aspartate: step 2/4. It participates in amino-acid biosynthesis; L-methionine biosynthesis via de novo pathway; L-homoserine from L-aspartate: step 2/3. Its pathway is amino-acid biosynthesis; L-threonine biosynthesis; L-threonine from L-aspartate: step 2/5. In terms of biological role, catalyzes the NADPH-dependent formation of L-aspartate-semialdehyde (L-ASA) by the reductive dephosphorylation of L-aspartyl-4-phosphate. The sequence is that of Aspartate-semialdehyde dehydrogenase from Neisseria meningitidis serogroup A / serotype 4A (strain DSM 15465 / Z2491).